Reading from the N-terminus, the 482-residue chain is 6-phosphogluconate dehydrogenase, decarboxylating (482 aa).

NADP(+) contacts are provided by residues 17 to 22 (GLAVMG), 40 to 42 (NRS), 82 to 84 (VKA), and N110. Substrate contacts are provided by residues N110 and 136-138 (SGG). The active-site Proton acceptor is K193. 196–197 (HN) is a binding site for substrate. Catalysis depends on E200, which acts as the Proton donor. Substrate contacts are provided by Y201, K272, R299, R457, and H463.

Belongs to the 6-phosphogluconate dehydrogenase family. As to quaternary structure, homodimer.

It carries out the reaction 6-phospho-D-gluconate + NADP(+) = D-ribulose 5-phosphate + CO2 + NADPH. Its pathway is carbohydrate degradation; pentose phosphate pathway; D-ribulose 5-phosphate from D-glucose 6-phosphate (oxidative stage): step 3/3. Catalyzes the oxidative decarboxylation of 6-phosphogluconate to ribulose 5-phosphate and CO(2), with concomitant reduction of NADP to NADPH. The protein is 6-phosphogluconate dehydrogenase, decarboxylating (gnd) of Synechocystis sp. (strain ATCC 27184 / PCC 6803 / Kazusa).